A 515-amino-acid polypeptide reads, in one-letter code: FAD-dependent oxidoreductase domain-containing protein 1 homolog (515 aa).

The interval 18–37 is disordered; sequence AGATSNGSGSSGGDKSGEDL. A helical membrane pass occupies residues 100 to 116; that stretch reads VLIIGGGGVGSSIAYWL.

As to quaternary structure, associates with mitochondrial complex I assembly intermediates during its biogenesis. FAD serves as cofactor.

The protein resides in the mitochondrion inner membrane. Involved in the assembly of the mitochondrial membrane respiratory chain NADH dehydrogenase (Complex I). This chain is FAD-dependent oxidoreductase domain-containing protein 1 homolog, found in Drosophila melanogaster (Fruit fly).